Reading from the N-terminus, the 3005-residue chain is Highly reducing polyketide synthase AFT9-1 (3005 aa).

The Ketosynthase family 3 (KS3) domain occupies 1 to 337 (MDPQQRLLLE…GTNAHAILER (337 aa)). Active-site for beta-ketoacyl synthase activity residues include cysteine 87, histidine 222, and histidine 260. A malonyl-CoA:ACP transacylase (MAT) domain region spans residues 437–751 (VFTGQGAQWP…SYMSALVRGS (315 aa)). An N-terminal hotdog fold region spans residues 821 to 936 (HDLLGLKMTD…GSVEVKYAAA (116 aa)). Residues 821–1114 (HDLLGLKMTD…SGLELRRLAP (294 aa)) are dehydratase (DH) domain. A PKS/mFAS DH domain is found at 821–1118 (HDLLGLKMTD…LRRLAPTGQP (298 aa)). The Proton acceptor; for dehydratase activity role is filled by histidine 853. The tract at residues 963 to 1118 (IEKISSQELY…LRRLAPTGQP (156 aa)) is C-terminal hotdog fold. Aspartate 1028 acts as the Proton donor; for dehydratase activity in catalysis. A methyltransferase (CMet) domain region spans residues 1259–1445 (ADDSSKRCYD…MRKASLNMQL (187 aa)). The interval 1683 to 1985 (EFMKMPVFTE…QHHRNESTVL (303 aa)) is enoyl reductase (ER) (ER) domain. A ketoreductase (KR) domain region spans residues 2008–2191 (ATYVVSGGRG…YMSLNVGTIE (184 aa)). The region spanning 2293–2375 (TRDFEKISQL…SLGAKVASRS (83 aa)) is the Carrier domain. Residue serine 2335 is modified to O-(pantetheine 4'-phosphoryl)serine.

The protein operates within mycotoxin biosynthesis. Its function is as follows. Highly reducing polyketide synthase; part of the gene clusters that mediate the biosynthesis of the host-selective toxins (HSTs) AF-toxins responsible for Alternaria black spot of strawberry disease by the strawberry pathotype. AF-toxin I and III are valine derivatives of 2,3-dyhydroxy-isovaleric acid and 2-hydroxy-isovaleric acid respectively, while AF II is an isoleucine derivative of 2-hydroxy-valeric acid. These derivatives are bound to a 9,10-epoxy-8-hydroxy-9-methyl-decatrienoic acid (EDA) moiety. On cellular level, AF-toxins affect plasma membrane of susceptible cells and cause a sudden increase in loss of K(+) after a few minutes of toxin treatment. The aldo-keto reductase AFTS1 catalyzes the conversion of 2-keto-isovaleric acid (2-KIV) to 2-hydroxy-isovaleric acid (2-HIV) by reduction of its ketone to an alcohol. The acyl-CoA ligase AFT1, the hydrolase AFT2 and the enoyl-CoA hydratases AFT3 and AFT6, but also the polyketide synthase AFT9, the acyl-CoA dehydrogenase AFT10, the cytochrome P450 monooxygenase AFT11 and the oxidoreductase AFT12 are all involved in the biosynthesis of the AK-, AF- and ACT-toxin common EDA structural moiety. The exact function of each enzyme, and of additional enzymes identified within the AF-toxin clusters have still to be determined. In Alternaria alternata (Alternaria rot fungus), this protein is Highly reducing polyketide synthase AFT9-1.